The primary structure comprises 149 residues: 1,4-dihydroxy-2-naphthoyl-CoA hydrolase (149 aa).

Residue D19 is part of the active site.

It belongs to the 4-hydroxybenzoyl-CoA thioesterase family. DHNA-CoA hydrolase subfamily.

It catalyses the reaction 1,4-dihydroxy-2-naphthoyl-CoA + H2O = 1,4-dihydroxy-2-naphthoate + CoA + H(+). It participates in cofactor biosynthesis; phylloquinone biosynthesis. Its pathway is quinol/quinone metabolism; 1,4-dihydroxy-2-naphthoate biosynthesis; 1,4-dihydroxy-2-naphthoate from chorismate: step 7/7. In terms of biological role, catalyzes the hydrolysis of 1,4-dihydroxy-2-naphthoyl-CoA (DHNA-CoA) to 1,4-dihydroxy-2-naphthoate (DHNA), a reaction involved in phylloquinone (vitamin K1) biosynthesis. The protein is 1,4-dihydroxy-2-naphthoyl-CoA hydrolase of Synechococcus sp. (strain CC9902).